The following is a 366-amino-acid chain: MEGLVLLKALVTRLLFLLHSLVAVWRVTWVKEEHRYWLLALLNLLLVLETVLTLKFKRGRGYKWLSPAIFVYLVNIMPSLWLLEMHHGNQYCSTQSERMAQNFSRRGDVNQTLSSHRATNGMGNILELARGFVDNLSMVCEPVWTLGLHQTLLLILIIGRWLLPIGGTITRDQLSELLLMFVGTAADILEFTTETLKENNVRTNPTLVSGILVVWTWSMLQFPLDLAVQLKLVCPASVKARGFLRVFLCQYSADLWAIGLSFFIQDGPFLVVRLVLMIYFKVINHMLVFFAVKNSLVMALHFYRLVALIMATRDFMRDHPESPKPEHSGPDQPSESGPSEWEDASPEALPLRTSPVTSEESYPTTP.

The next 3 helical transmembrane spans lie at 4–24 (LVLL…LVAV), 36–56 (YWLL…TLKF), and 64–84 (WLSP…WLLE). A glycan (N-linked (GlcNAc...) asparagine) is linked at N110. Helical transmembrane passes span 138-158 (MVCE…ILII), 176-196 (ELLL…TETL), 208-228 (VSGI…DLAV), 258-278 (IGLS…VLMI), and 282-302 (VINH…ALHF). Basic and acidic residues predominate over residues 319–329 (HPESPKPEHSG). Residues 319 to 366 (HPESPKPEHSGPDQPSESGPSEWEDASPEALPLRTSPVTSEESYPTTP) are disordered. A compositionally biased stretch (polar residues) spans 354–366 (SPVTSEESYPTTP).

The protein localises to the membrane. The polypeptide is Transmembrane protein 26 (Tmem26) (Mus musculus (Mouse)).